Here is a 516-residue protein sequence, read N- to C-terminus: Exoglucanase 1 (516 aa).

The N-terminal stretch at 1 to 17 (MRASLLAFSLAAAVAGG) is a signal peptide. Residues 18–445 (QQAGTLTAKR…GHLGISPFSG (428 aa)) are catalytic. Asn-45 is a glycosylation site (N-linked (GlcNAc...) asparagine). Glu-223 (nucleophile) is an active-site residue. The Proton donor role is filled by Glu-228. Asn-281 carries N-linked (GlcNAc...) asparagine glycosylation. Residues 444–481 (SGGSSGTPPSNPSSSASPTSSTAKPSSTSTASNPSGTG) are disordered. Residues 446–480 (GSSGTPPSNPSSSASPTSSTAKPSSTSTASNPSGT) form a linker region. Over residues 449–481 (GTPPSNPSSSASPTSSTAKPSSTSTASNPSGTG) the composition is skewed to low complexity. The 37-residue stretch at 480 to 516 (TGAAHWAQCGGIGFSGPTTCPEPYTCAKDHDIYSQCV) folds into the CBM1 domain. Cystine bridges form between Cys-488/Cys-505 and Cys-499/Cys-515.

It belongs to the glycosyl hydrolase 7 (cellulase C) family.

Its subcellular location is the secreted. The catalysed reaction is Hydrolysis of (1-&gt;4)-beta-D-glucosidic linkages in cellulose and cellotetraose, releasing cellobiose from the non-reducing ends of the chains.. This chain is Exoglucanase 1 (cbh-1), found in Neurospora crassa (strain ATCC 24698 / 74-OR23-1A / CBS 708.71 / DSM 1257 / FGSC 987).